We begin with the raw amino-acid sequence, 808 residues long: ATP-dependent 6-phosphofructokinase (808 aa).

The interval 1-21 (MSSTQAPVEPPKRRRIGVLTS) is disordered. Residues 1-389 (MSSTQAPVEP…YHFAYRNTAT (389 aa)) form an N-terminal catalytic PFK domain 1 region. ATP contacts are provided by residues Gly-23, 86–87 (RS), and 116–119 (GDGS). Asp-117 is a Mg(2+) binding site. Residues 162-164 (SID), Arg-199, 206-208 (MGR), Glu-263, Arg-291, and 297-300 (HTQR) contribute to the substrate site. Asp-164 (proton acceptor) is an active-site residue. The tract at residues 390–403 (PDHPKMILPQDKRM) is interdomain linker. Residues 404–808 (RIAIIHVGAP…DIDPSALTSS (405 aa)) form a C-terminal regulatory PFK domain 2 region. Residues Arg-480, 537-541 (TISNN), Arg-575, 582-584 (QGG), Glu-642, Arg-668, 674-677 (HFQQ), and Arg-749 each bind beta-D-fructose 2,6-bisphosphate.

The protein belongs to the phosphofructokinase type A (PFKA) family. ATP-dependent PFK group I subfamily. Eukaryotic two domain clade 'E' sub-subfamily. As to quaternary structure, homotetramer. Mg(2+) serves as cofactor.

It localises to the cytoplasm. It carries out the reaction beta-D-fructose 6-phosphate + ATP = beta-D-fructose 1,6-bisphosphate + ADP + H(+). It functions in the pathway carbohydrate degradation; glycolysis; D-glyceraldehyde 3-phosphate and glycerone phosphate from D-glucose: step 3/4. With respect to regulation, allosterically activated by ADP, AMP, or fructose 2,6-bisphosphate, and allosterically inhibited by ATP or citrate. In terms of biological role, catalyzes the phosphorylation of D-fructose 6-phosphate to fructose 1,6-bisphosphate by ATP, the first committing step of glycolysis. This is ATP-dependent 6-phosphofructokinase (pfkA) from Aspergillus fumigatus (strain ATCC MYA-4609 / CBS 101355 / FGSC A1100 / Af293) (Neosartorya fumigata).